A 476-amino-acid polypeptide reads, in one-letter code: FAD-dependent monooxygenase dpasE (476 aa).

The N-terminal stretch at 1–21 (MSQPAFKIIIVGCSVTGLTLA) is a signal peptide. FAD-binding residues include E35, A49, and R109. N-linked (GlcNAc...) asparagine glycans are attached at residues N190 and N219. Positions 308 and 321 each coordinate FAD. The helical transmembrane segment at 441 to 461 (GAGFWITAFLSLSLLAVAATM) threads the bilayer.

This sequence belongs to the paxM FAD-dependent monooxygenase family. FAD is required as a cofactor.

The protein resides in the membrane. Its pathway is secondary metabolite biosynthesis; terpenoid biosynthesis. FAD-dependent monooxygenase; part of the gene cluster that mediates the biosynthesis of the diterpenoid pyrones subglutinols A and B. The first step of the pathway is the synthesis of the alpha-pyrone moiety by the polyketide synthase dpasA via condensation of one acetyl-CoA starter unit with 3 malonyl-CoA units and 2 methylations. The alpha-pyrone is then combined with geranylgeranyl pyrophosphate (GGPP) formed by the GGPP synthase dpasD through the action of the prenyltransferase dpasC to yield a linear alpha-pyrone diterpenoid. Subsequent steps in the diterpenoid pyrone biosynthetic pathway involve the decalin core formation, which is initiated by the epoxidation of the C10-C11 olefin by the FAD-dependent oxidoreductase dpasE, and is followed by a cyclization cascade catalyzed by the terpene cyclase dpasB. The FAD-linked oxidoreductase dpasF is then involved in tetrahydrofuran (THF) ring formation at the C5 unit to complete the formation of subglutinols A and B. DpasF possesses also an additional catalytic ability of multi-step oxidations to generate a new DDP analog with an enone system at the C5 named FDDP A. The chain is FAD-dependent monooxygenase dpasE from Apiospora sacchari (Arthrinium sacchari).